The following is a 246-amino-acid chain: tRNA (guanine-N(1)-)-methyltransferase (246 aa).

Residues glycine 112 and 131 to 136 (IGDYVL) contribute to the S-adenosyl-L-methionine site.

It belongs to the RNA methyltransferase TrmD family. Homodimer.

The protein localises to the cytoplasm. It catalyses the reaction guanosine(37) in tRNA + S-adenosyl-L-methionine = N(1)-methylguanosine(37) in tRNA + S-adenosyl-L-homocysteine + H(+). Specifically methylates guanosine-37 in various tRNAs. The sequence is that of tRNA (guanine-N(1)-)-methyltransferase from Thermosipho africanus (strain TCF52B).